Consider the following 437-residue polypeptide: MANPIVAVVGRPNVGKSTLFNRIAGERISIVEDTPGVTRDRIYAHAEWLGKHFSMIDTGGIEISDQPLLTQIRQQAEIAIDEADVIIFVADVENGVTDADEQVARILYRSNKPVVLAVNKVDNPERRSDIYDYYSLGLGEPYAVSSVHGIGMGDLLDAVIKEFPDNAANDEDDSIHFSFIGRPNVGKSSLVNAILGENRVIVSNVAGTTRDAINTQFETADGQKFTMVDTAGIRKKGKIYENTERYSLMRSMRAIDDSDVVLVVLNAEEGIRELDKHIAGYAHEAGCGVIIVVNKWDTLKEKDHRTMTDFTNLIRQEFQYLSYAPIIFVSAKTKQRLNQLPGLIEEVYQHHRQRIQSAVLNDVLMDAIAANPTPTQNGRRLRVYYGTQVATEPPTFVIFVNDPELMHFSYERYLENQIRKAFDFSGTPIHLIKRQRQ.

2 consecutive EngA-type G domains span residues 4 to 167 (PIVA…PDNA) and 175 to 352 (IHFS…QHHR). GTP-binding positions include 10-17 (GRPNVGKS), 57-61 (DTGGI), 119-122 (NKVD), 181-188 (GRPNVGKS), 229-233 (DTAGI), and 294-297 (NKWD). One can recognise a KH-like domain in the interval 353 to 437 (QRIQSAVLND…PIHLIKRQRQ (85 aa)).

It belongs to the TRAFAC class TrmE-Era-EngA-EngB-Septin-like GTPase superfamily. EngA (Der) GTPase family. In terms of assembly, associates with the 50S ribosomal subunit.

Functionally, GTPase that plays an essential role in the late steps of ribosome biogenesis. In Limosilactobacillus reuteri (strain DSM 20016) (Lactobacillus reuteri), this protein is GTPase Der.